The primary structure comprises 220 residues: MVLKTIEYDYLCKIVVIGDSGVGKSNLLSRYNKNEFSVGKLSTIGVEFSTKTLKIDNKLIKLQLWDTAGQEKYNSITESYYKGAIGALIVYNIADRNSFNNLEKWLKKFRENAHQDYGIMLVGNKSDLKEYREVSTLEGKQFAEKHYMQFIETSALDSNNVETAFNNLFNFIYYSLFKNKTMTLDINNNGNNNSNIMVGDCEPIQFDQRYTINKPVYDCC.

18 to 25 is a binding site for GTP; sequence GDSGVGKS. The Effector region signature appears at 40–48; it reads KLSTIGVEF. Residues 66 to 70 and 124 to 127 each bind GTP; these read DTAGQ and NKSD. 2 S-geranylgeranyl cysteine lipidation sites follow: Cys219 and Cys220.

This sequence belongs to the small GTPase superfamily. Rab family.

The protein localises to the cell membrane. The polypeptide is Ras-related protein Rab-11B (rab11B) (Dictyostelium discoideum (Social amoeba)).